The chain runs to 1544 residues: Arf-GAP with Rho-GAP domain, ANK repeat and PH domain-containing protein 3 (1544 aa).

The 65-residue stretch at 4–68 (PQDLDIAVWL…LRLLQTGTEE (65 aa)) folds into the SAM domain. Disordered regions lie at residues 64–147 (TGTE…EQSS) and 167–194 (GRAQ…PTTG). 2 stretches are compositionally biased toward pro residues: residues 82–97 (SPSP…PVPK) and 130–139 (EPSPRPPPLP). 2 consecutive PH domains span residues 287 to 379 (TPLL…SCLK) and 394 to 483 (RPLR…EAVT). In terms of domain architecture, Arf-GAP spans 480–611 (EAVTETLSDY…LFRKPHPQYP (132 aa)). Residues 504–527 (CADCGSSRPDWAAVNLGVVICKQC) form a C4-type zinc finger. Residues 907–1088 (TGLQEQQMSR…ELIDGYISVF (182 aa)) form the Rho-GAP domain. Residues 1117–1210 (GDLIMEVYIE…ASLLLKKVPL (94 aa)) enclose the Ras-associating domain. A PH 3 domain is found at 1223 to 1325 (ESPRVGLLRC…WTTSILKAQH (103 aa)). Threonine 1348 carries the phosphothreonine modification. Phosphotyrosine occurs at positions 1403 and 1408. The interval 1422–1544 (STSFSTTREW…SSPPSSQPLT (123 aa)) is disordered. Polar residues predominate over residues 1438 to 1457 (PLTSQKSLDQPFLSKSSTLG). A phosphoserine mark is found at serine 1444 and serine 1480. Low complexity-rich tracts occupy residues 1482–1492 (EEQLLQELSSL) and 1502–1527 (GLGS…TPGF).

In terms of assembly, interacts (via SAM domain) with INPPL1/SHIP2. In terms of processing, tyrosine phosphorylated at a low basal level. PDGF treatment stimulates phosphorylation. Tyrosine phosphorylation is increased in cells that are in the process of becoming attached to a substrate and that start spreading and flattening.

It localises to the cytoplasm. The protein resides in the cytoskeleton. The protein localises to the cell membrane. Its subcellular location is the cell projection. It is found in the lamellipodium. It localises to the ruffle. In terms of biological role, phosphatidylinositol 3,4,5-trisphosphate-dependent GTPase-activating protein that modulates actin cytoskeleton remodeling by regulating ARF and RHO family members. Is activated by phosphatidylinositol 3,4,5-trisphosphate (PtdIns(3,4,5)P3) binding. Can be activated by phosphatidylinositol 3,4-bisphosphate (PtdIns(3,4,5)P2) binding, albeit with lower efficiency. Acts on ARF6, RAC1, RHOA and CDC42. Plays a role in the internalization of anthrax toxin. The chain is Arf-GAP with Rho-GAP domain, ANK repeat and PH domain-containing protein 3 (ARAP3) from Homo sapiens (Human).